A 363-amino-acid chain; its full sequence is MKLRTCCISLMLLLALPLQAARIKDVSEVAGVRSNQLVGYGLVVGLPGTGETTPFTDQSFNAMLQNFGIQLPAGTKPKTKNVAAVAVNATLPAFTKQGQKIDITVSSIGSAKSLRGGTLLQTFLKGLDGKVYAVAQGSLVVGGFSVTGADGSKLVGNIPTVGRISNGAMVEQEVPNPFGRGDFLTFNLFESDFSTAQRLADAVNEFLGPEMAAAIDATSVRVRAPRDVSQRVAFLATVENIEFDPAVGAAKIIVNSRTGTIVIGQNVKLKPAAITHGGMTVSIKENYQVSQPAPFSGGETVVVPNSEIEVTEKDSRMFKFEPGVTLDELVRAVNQVGAAPSDLMAILQALKQAGAIEGQLIII.

Positions 1 to 20 (MKLRTCCISLMLLLALPLQA) are cleaved as a signal peptide.

It belongs to the FlgI family. In terms of assembly, the basal body constitutes a major portion of the flagellar organelle and consists of four rings (L,P,S, and M) mounted on a central rod.

It localises to the periplasm. The protein localises to the bacterial flagellum basal body. Its function is as follows. Assembles around the rod to form the L-ring and probably protects the motor/basal body from shearing forces during rotation. The chain is Flagellar P-ring protein 2 from Photobacterium profundum (strain SS9).